Here is a 490-residue protein sequence, read N- to C-terminus: GTPase Der (490 aa).

EngA-type G domains lie at 3-166 (PVIA…PKDE) and 196-369 (IKIA…KSAV). GTP contacts are provided by residues 9–16 (GRPNVGKS), 56–60 (DTGGI), 118–121 (NKID), 202–209 (GRPNVGKS), 249–253 (DTAGV), and 314–317 (NKWD). In terms of domain architecture, KH-like spans 370 to 454 (TRWPTSRLTQ…PIRIEFKGGE (85 aa)). Residues 452–490 (GGENPYEGNKNTLTDRQVNKKRRMMSHHKKADKKRRDKR) form a disordered region. Residues 470–490 (NKKRRMMSHHKKADKKRRDKR) show a composition bias toward basic residues.

The protein belongs to the TRAFAC class TrmE-Era-EngA-EngB-Septin-like GTPase superfamily. EngA (Der) GTPase family. In terms of assembly, associates with the 50S ribosomal subunit.

Functionally, GTPase that plays an essential role in the late steps of ribosome biogenesis. The sequence is that of GTPase Der from Pseudomonas savastanoi pv. phaseolicola (strain 1448A / Race 6) (Pseudomonas syringae pv. phaseolicola (strain 1448A / Race 6)).